A 204-amino-acid polypeptide reads, in one-letter code: LexA repressor (204 aa).

A DNA-binding region (H-T-H motif) is located at residues 28-48; that stretch reads VREIGQAVGLASSSTVHGHLS. Catalysis depends on for autocatalytic cleavage activity residues S126 and K164.

This sequence belongs to the peptidase S24 family. In terms of assembly, homodimer.

It catalyses the reaction Hydrolysis of Ala-|-Gly bond in repressor LexA.. In terms of biological role, represses a number of genes involved in the response to DNA damage (SOS response), including recA and lexA. In the presence of single-stranded DNA, RecA interacts with LexA causing an autocatalytic cleavage which disrupts the DNA-binding part of LexA, leading to derepression of the SOS regulon and eventually DNA repair. The sequence is that of LexA repressor from Bacillus mycoides (strain KBAB4) (Bacillus weihenstephanensis).